The primary structure comprises 914 residues: Solute carrier family 12 member 9 (914 aa).

Over 1 to 36 (MASESSPLLAYRLLGEEGAAFPPNGAGVSGVPSSRK) the chain is Cytoplasmic. Ser6 carries the phosphoserine modification. The helical transmembrane segment at 37 to 57 (LSTFLGVVVPTVLSMFSIVVF) threads the bilayer. Topologically, residues 58–72 (LRIGFVVGHAGLLQA) are extracellular. Residues 73 to 93 (LAMLLVAYIILALTVLSVCAI) form a helical membrane-spanning segment. The Cytoplasmic segment spans residues 94-119 (ATNGAVRGGGAYFMISRTLGPEVGGS). Residues 120–140 (IGLMFYLANVCGCAVSLLGLV) form a helical membrane-spanning segment. Topologically, residues 141 to 167 (ESILDVFGADATGSSGIQVLPQGYGWN) are extracellular. The helical transmembrane segment at 168–188 (LLYGSLLLGLVGGVCTLGAGL) threads the bilayer. Residues 189 to 193 (YARAS) lie on the Cytoplasmic side of the membrane. Residues 194 to 214 (FLTFLLVSGSLASVLVSFVAV) traverse the membrane as a helical segment. Residues 215–262 (GPRNIPLAPRPGTNASSVPHRHGHFTGFNGSTLRDNLGAGYAEDYTTG) are Extracellular-facing. 2 N-linked (GlcNAc...) asparagine glycosylation sites follow: Asn228 and Asn243. Residues 263–283 (AMMTFASVFAVLFNGCTGIMA) form a helical membrane-spanning segment. Residues 284–297 (GANMSGELKDPSRA) lie on the Cytoplasmic side of the membrane. A helical membrane pass occupies residues 298–318 (IPLGTIIAVAYTFFIYILLFF). The Extracellular portion of the chain corresponds to 319–338 (LSSFTCDRALLQEDYGFFRD). The helical transmembrane segment at 339 to 359 (ISLWPPLVLIGIYATALSASM) threads the bilayer. Over 360 to 376 (SSLIGASRILHALAQDD) the chain is Cytoplasmic. Residues 377–399 (LFGVILAPAKVVSGGGNPWGAVL) traverse the membrane as a helical segment. The Extracellular portion of the chain corresponds to 400-416 (YSWGLVQLVLLAGKLNT). A helical membrane pass occupies residues 417-437 (LAAVVTVFYLVAYAAVDLSCL). Topologically, residues 438–466 (SLEWASAPNFRPTFSLFSWHTCLLGVASC) are cytoplasmic. A helical membrane pass occupies residues 467-487 (LLMMFLISPGAAGGSLLLMGL). At 488-740 (LSALLTARGG…LLRPRGGPGY (253 aa)) the chain is on the extracellular side. Positions 645–678 (PAFSEPAEGTREGGSPALSTLFPPPRAPGSPRAL) are disordered. Residues 741–761 (VDVCGLFLLQMATILSMVPAW) traverse the membrane as a helical segment. The Cytoplasmic segment spans residues 762-914 (HSARLRIFLC…GVTPVTCTDL (153 aa)). Positions 844–864 (QGRGTVGGPGGPEGRDGEEGP) are disordered.

The protein belongs to the SLC12A transporter family. As to quaternary structure, interacts with SLC12A1.

The protein resides in the cell membrane. It is found in the lysosome membrane. In terms of biological role, may be an inhibitor of SLC12A1. Seems to correspond to a subunit of a multimeric transport system and thus, additional subunits may be required for its function. May play a role in lysosomal ion flux and osmoregulation. The polypeptide is Solute carrier family 12 member 9 (Slc12a9) (Mus musculus (Mouse)).